Consider the following 138-residue polypeptide: Phosphoribosyl-AMP cyclohydrolase (138 aa).

D84 contributes to the Mg(2+) binding site. C85 is a Zn(2+) binding site. Mg(2+) contacts are provided by D86 and D88. C102 and C109 together coordinate Zn(2+).

The protein belongs to the PRA-CH family. Homodimer. Requires Mg(2+) as cofactor. It depends on Zn(2+) as a cofactor.

The protein localises to the cytoplasm. The catalysed reaction is 1-(5-phospho-beta-D-ribosyl)-5'-AMP + H2O = 1-(5-phospho-beta-D-ribosyl)-5-[(5-phospho-beta-D-ribosylamino)methylideneamino]imidazole-4-carboxamide. It functions in the pathway amino-acid biosynthesis; L-histidine biosynthesis; L-histidine from 5-phospho-alpha-D-ribose 1-diphosphate: step 3/9. In terms of biological role, catalyzes the hydrolysis of the adenine ring of phosphoribosyl-AMP. In Burkholderia orbicola (strain MC0-3), this protein is Phosphoribosyl-AMP cyclohydrolase.